A 270-amino-acid polypeptide reads, in one-letter code: Putative pyruvate, phosphate dikinase regulatory protein 2 (270 aa).

Residue 151–158 participates in ADP binding; the sequence is GVSRTSKT.

This sequence belongs to the pyruvate, phosphate/water dikinase regulatory protein family. PDRP subfamily.

It catalyses the reaction N(tele)-phospho-L-histidyl/L-threonyl-[pyruvate, phosphate dikinase] + ADP = N(tele)-phospho-L-histidyl/O-phospho-L-threonyl-[pyruvate, phosphate dikinase] + AMP + H(+). The catalysed reaction is N(tele)-phospho-L-histidyl/O-phospho-L-threonyl-[pyruvate, phosphate dikinase] + phosphate + H(+) = N(tele)-phospho-L-histidyl/L-threonyl-[pyruvate, phosphate dikinase] + diphosphate. In terms of biological role, bifunctional serine/threonine kinase and phosphorylase involved in the regulation of the pyruvate, phosphate dikinase (PPDK) by catalyzing its phosphorylation/dephosphorylation. This chain is Putative pyruvate, phosphate dikinase regulatory protein 2, found in Listeria innocua serovar 6a (strain ATCC BAA-680 / CLIP 11262).